The following is a 241-amino-acid chain: Triosephosphate isomerase (241 aa).

9–11 is a substrate binding site; that stretch reads NWK. His-88 serves as the catalytic Electrophile. The Proton acceptor role is filled by Glu-158. Substrate is bound by residues Gly-164, Ser-203, and 224–225; that span reads GG.

It belongs to the triosephosphate isomerase family. Homodimer.

Its subcellular location is the cytoplasm. The catalysed reaction is D-glyceraldehyde 3-phosphate = dihydroxyacetone phosphate. Its pathway is carbohydrate biosynthesis; gluconeogenesis. The protein operates within carbohydrate degradation; glycolysis; D-glyceraldehyde 3-phosphate from glycerone phosphate: step 1/1. In terms of biological role, involved in the gluconeogenesis. Catalyzes stereospecifically the conversion of dihydroxyacetone phosphate (DHAP) to D-glyceraldehyde-3-phosphate (G3P). The protein is Triosephosphate isomerase of Dichelobacter nodosus (strain VCS1703A).